The following is a 217-amino-acid chain: 7-cyano-7-deazaguanine synthase (217 aa).

Position 7 to 17 (7 to 17) interacts with ATP; the sequence is LSGGMDSTTLL. Residues cysteine 183, cysteine 191, cysteine 194, and cysteine 197 each contribute to the Zn(2+) site.

It belongs to the QueC family. The cofactor is Zn(2+).

The catalysed reaction is 7-carboxy-7-deazaguanine + NH4(+) + ATP = 7-cyano-7-deazaguanine + ADP + phosphate + H2O + H(+). The protein operates within purine metabolism; 7-cyano-7-deazaguanine biosynthesis. In terms of biological role, catalyzes the ATP-dependent conversion of 7-carboxy-7-deazaguanine (CDG) to 7-cyano-7-deazaguanine (preQ(0)). This is 7-cyano-7-deazaguanine synthase from Methanoregula boonei (strain DSM 21154 / JCM 14090 / 6A8).